A 130-amino-acid chain; its full sequence is uncharacterized protein (130 aa).

Composition is skewed to polar residues over residues Met-1–Gln-27 and Gln-36–Gly-46. Disordered regions lie at residues Met-1–Gly-46 and Val-103–Leu-130. The stretch at Gln-27 to Ile-51 forms a coiled coil.

It belongs to the PDCD5 family.

This is an uncharacterized protein from Caenorhabditis elegans.